We begin with the raw amino-acid sequence, 64 residues long: uncharacterized protein (64 aa).

A compositionally biased stretch (polar residues) spans 1–14 (MFNFDPTDQPTDQH). Positions 1 to 42 (MFNFDPTDQPTDQHLLQLPTDPHPLQQPIDPHPPPQPNNNLP) are disordered.

This is an uncharacterized protein from Dictyostelium discoideum (Social amoeba).